The sequence spans 502 residues: Probable mitochondrial-processing peptidase subunit alpha (502 aa).

This sequence belongs to the peptidase M16 family. Heterodimer of mas2 (alpha) and mas1 (beta) subunits, forming the mitochondrial processing protease (MPP) in which mas2 is involved in substrate recognition and binding and mas1 is the catalytic subunit.

Its subcellular location is the mitochondrion matrix. Functionally, substrate recognition and binding subunit of the essential mitochondrial processing protease (MPP), which cleaves the mitochondrial sequence off newly imported precursors proteins. The polypeptide is Probable mitochondrial-processing peptidase subunit alpha (mas2) (Schizosaccharomyces pombe (strain 972 / ATCC 24843) (Fission yeast)).